Reading from the N-terminus, the 325-residue chain is Acetyl-coenzyme A carboxylase carboxyl transferase subunit alpha (325 aa).

In terms of domain architecture, CoA carboxyltransferase C-terminal spans 44 to 298 (QLEGRAEQLR…KTAILSNLEE (255 aa)).

This sequence belongs to the AccA family. Acetyl-CoA carboxylase is a heterohexamer composed of biotin carboxyl carrier protein (AccB), biotin carboxylase (AccC) and two subunits each of ACCase subunit alpha (AccA) and ACCase subunit beta (AccD).

Its subcellular location is the cytoplasm. The catalysed reaction is N(6)-carboxybiotinyl-L-lysyl-[protein] + acetyl-CoA = N(6)-biotinyl-L-lysyl-[protein] + malonyl-CoA. Its pathway is lipid metabolism; malonyl-CoA biosynthesis; malonyl-CoA from acetyl-CoA: step 1/1. Functionally, component of the acetyl coenzyme A carboxylase (ACC) complex. First, biotin carboxylase catalyzes the carboxylation of biotin on its carrier protein (BCCP) and then the CO(2) group is transferred by the carboxyltransferase to acetyl-CoA to form malonyl-CoA. This chain is Acetyl-coenzyme A carboxylase carboxyl transferase subunit alpha, found in Acaryochloris marina (strain MBIC 11017).